We begin with the raw amino-acid sequence, 132 residues long: Protein MrkF (132 aa).

The protein localises to the fimbrium. Functionally, appears to affect the stability of the intact fimbriae on the cell surface. The polypeptide is Protein MrkF (mrkF) (Klebsiella pneumoniae).